The following is a 362-amino-acid chain: Phospho-N-acetylmuramoyl-pentapeptide-transferase (362 aa).

10 consecutive transmembrane segments (helical) span residues 28-48 (IISF…VITW), 72-92 (TPTM…MVCA), 94-114 (LSNI…ILGL), 131-151 (VLHK…IIFM), 169-189 (FMPQ…VGTS), 200-220 (GLAI…AWIS), 236-256 (FSGE…GFLW), 264-284 (IFMG…IAVL), 290-310 (LLLI…LQVI), and 339-359 (IIVR…ITLK).

The protein belongs to the glycosyltransferase 4 family. MraY subfamily. It depends on Mg(2+) as a cofactor.

It localises to the cell inner membrane. The catalysed reaction is UDP-N-acetyl-alpha-D-muramoyl-L-alanyl-gamma-D-glutamyl-meso-2,6-diaminopimeloyl-D-alanyl-D-alanine + di-trans,octa-cis-undecaprenyl phosphate = di-trans,octa-cis-undecaprenyl diphospho-N-acetyl-alpha-D-muramoyl-L-alanyl-D-glutamyl-meso-2,6-diaminopimeloyl-D-alanyl-D-alanine + UMP. The protein operates within cell wall biogenesis; peptidoglycan biosynthesis. In terms of biological role, catalyzes the initial step of the lipid cycle reactions in the biosynthesis of the cell wall peptidoglycan: transfers peptidoglycan precursor phospho-MurNAc-pentapeptide from UDP-MurNAc-pentapeptide onto the lipid carrier undecaprenyl phosphate, yielding undecaprenyl-pyrophosphoryl-MurNAc-pentapeptide, known as lipid I. This chain is Phospho-N-acetylmuramoyl-pentapeptide-transferase, found in Blochmanniella pennsylvanica (strain BPEN).